The following is a 207-amino-acid chain: Probable RNA 2'-phosphotransferase (207 aa).

The protein belongs to the KptA/TPT1 family.

In terms of biological role, removes the 2'-phosphate from RNA via an intermediate in which the phosphate is ADP-ribosylated by NAD followed by a presumed transesterification to release the RNA and generate ADP-ribose 1''-2''-cyclic phosphate (APPR&gt;P). May function as an ADP-ribosylase. The protein is Probable RNA 2'-phosphotransferase of Methanosarcina acetivorans (strain ATCC 35395 / DSM 2834 / JCM 12185 / C2A).